Here is a 538-residue protein sequence, read N- to C-terminus: Pentatricopeptide repeat-containing protein At1g33350 (538 aa).

PPR repeat units follow at residues Asn-87–Arg-123, Asn-125–Leu-159, Tyr-160–Arg-191, Asn-192–Ser-226, Trp-227–Glu-253, Asn-259–Ser-293, Asp-294–Lys-324, Ser-325–Asp-359, Asp-363–Pro-398, and Arg-399–Ala-433. Residues Ile-434–Asp-509 form a type E motif region.

This sequence belongs to the PPR family. PCMP-E subfamily.

The chain is Pentatricopeptide repeat-containing protein At1g33350 (PCMP-E57) from Arabidopsis thaliana (Mouse-ear cress).